The following is an 855-amino-acid chain: DNA mismatch repair protein MutS (855 aa).

An ATP-binding site is contributed by 613 to 620; the sequence is GPNMGGKS. The disordered stretch occupies residues 796-816; sequence TTSLPHEMPSQQSGKPASPMQ.

This sequence belongs to the DNA mismatch repair MutS family.

In terms of biological role, this protein is involved in the repair of mismatches in DNA. It is possible that it carries out the mismatch recognition step. This protein has a weak ATPase activity. This chain is DNA mismatch repair protein MutS, found in Pseudomonas aeruginosa (strain ATCC 15692 / DSM 22644 / CIP 104116 / JCM 14847 / LMG 12228 / 1C / PRS 101 / PAO1).